Reading from the N-terminus, the 291-residue chain is Meiosis-specific protein SPO13 (291 aa).

3 disordered regions span residues Met1–Thr30, Ser116–Gln143, and Cys271–Asn291. The short motif at Pro3–Arg6 is the Nuclear localization signal element. A compositionally biased stretch (basic and acidic residues) spans Ser116–Asp125. Residues Pro130 to Gln143 are compositionally biased toward polar residues.

The protein resides in the nucleus. Its function is as follows. Required for meiosis I segmentation. Probably acts as a regulator of kinetochore function during meiosis I: required both for mono-orientation of kinetochores on sister chromosomes and protection of centromeric cohesin from separase-mediated cleavage. In Saccharomyces cerevisiae (strain ATCC 204508 / S288c) (Baker's yeast), this protein is Meiosis-specific protein SPO13 (SPO13).